We begin with the raw amino-acid sequence, 169 residues long: Disulfide bond formation protein B (169 aa).

The Cytoplasmic portion of the chain corresponds to 1–14; it reads MMRFLNHCSQGRSA. Residues 15-31 form a helical membrane-spanning segment; it reads WLLMILTALILESSALY. The Periplasmic portion of the chain corresponds to 32–49; sequence FQHVMKLQPCVMCIYERV. Cysteine 41 and cysteine 44 are joined by a disulfide. A helical membrane pass occupies residues 50 to 65; sequence ALFGVLSAGILGVIAP. At 66–71 the chain is on the cytoplasmic side; it reads KTPLRW. Residues 72–89 traverse the membrane as a helical segment; sequence LAIILWIYSAWGGLQLAW. The Periplasmic portion of the chain corresponds to 90 to 144; it reads QHTMMQLHPSPFNTCDFFVNFPSWLALNQWLPSVFEATGDCSVRQWQFLTLEMPQ. Cysteine 104 and cysteine 130 form a disulfide bridge. Residues 145-163 form a helical membrane-spanning segment; it reads WLVGIFAAYLVVAALVLIS. Residues 164 to 169 lie on the Cytoplasmic side of the membrane; that stretch reads QFFSRK.

Belongs to the DsbB family.

The protein resides in the cell inner membrane. Functionally, required for disulfide bond formation in some periplasmic proteins. Acts by oxidizing the DsbA protein. This chain is Disulfide bond formation protein B, found in Photorhabdus laumondii subsp. laumondii (strain DSM 15139 / CIP 105565 / TT01) (Photorhabdus luminescens subsp. laumondii).